The chain runs to 142 residues: 3-hydroxyacyl-[acyl-carrier-protein] dehydratase FabZ (142 aa).

His48 is an active-site residue.

Belongs to the thioester dehydratase family. FabZ subfamily.

Its subcellular location is the cytoplasm. It catalyses the reaction a (3R)-hydroxyacyl-[ACP] = a (2E)-enoyl-[ACP] + H2O. Its function is as follows. Involved in unsaturated fatty acids biosynthesis. Catalyzes the dehydration of short chain beta-hydroxyacyl-ACPs and long chain saturated and unsaturated beta-hydroxyacyl-ACPs. The polypeptide is 3-hydroxyacyl-[acyl-carrier-protein] dehydratase FabZ (Natranaerobius thermophilus (strain ATCC BAA-1301 / DSM 18059 / JW/NM-WN-LF)).